The following is a 364-amino-acid chain: Flagellar P-ring protein (364 aa).

Residues 1 to 29 (MKTIGGKVFRHAAILAACVLPLWCQPALA) form the signal peptide.

Belongs to the FlgI family. In terms of assembly, the basal body constitutes a major portion of the flagellar organelle and consists of four rings (L,P,S, and M) mounted on a central rod.

The protein resides in the periplasm. The protein localises to the bacterial flagellum basal body. Functionally, assembles around the rod to form the L-ring and probably protects the motor/basal body from shearing forces during rotation. The polypeptide is Flagellar P-ring protein (Dechloromonas aromatica (strain RCB)).